Consider the following 1023-residue polypeptide: Sodium/potassium-transporting ATPase subunit alpha-1 (1023 aa).

Positions M1–V5 are excised as a propeptide. Basic and acidic residues predominate over residues M1–E11. Residues M1–E38 form a disordered region. The Cytoplasmic segment spans residues G6–P87. K9 is modified (N6-acetyllysine). Y10 is modified (phosphotyrosine). S16 carries the post-translational modification Phosphoserine; by PKC. K21 is modified (N6-acetyllysine). Over residues K28 to E38 the composition is skewed to basic and acidic residues. A phosphoserine mark is found at S40 and S47. Positions P82–P84 are phosphoinositide-3 kinase binding. Residues E88–A108 traverse the membrane as a helical segment. Topologically, residues I109–Y131 are extracellular. Residues L132–A152 form a helical membrane-spanning segment. Residues K153–I288 lie on the Cytoplasmic side of the membrane. Residues S216–N235 form a disordered region. S228 bears the Phosphoserine mark. Y260 is subject to Phosphotyrosine. The helical transmembrane segment at E289–I308 threads the bilayer. The Extracellular portion of the chain corresponds to L309–A320. A helical transmembrane segment spans residues V321 to A338. Residues T339–L772 are Cytoplasmic-facing. D376 acts as the 4-aspartylphosphate intermediate in catalysis. A phosphoserine mark is found at S452 and S484. An ATP-binding site is contributed by K487. Y542 is modified (phosphotyrosine). The segment at R596 to D717 is mediates interaction with SCN7A. Residue K661 is modified to N6-succinyllysine. Residues S668 and S675 each carry the phosphoserine modification. Residues D717 and D721 each contribute to the Mg(2+) site. A helical membrane pass occupies residues K773–I792. Over F793 to L802 the chain is Extracellular. A helical membrane pass occupies residues G803 to A823. The Cytoplasmic portion of the chain corresponds to Y824 to K843. A helical transmembrane segment spans residues L844–F866. The Extracellular segment spans residues F867–C918. The helical transmembrane segment at H919–K938 threads the bilayer. Residues T939–N951 lie on the Cytoplasmic side of the membrane. At S943 the chain carries Phosphoserine; by PKA. Residues K952 to Y970 form a helical membrane-spanning segment. Residues C971–P985 lie on the Extracellular side of the membrane. A helical membrane pass occupies residues T986–K1006. Over L1007–Y1023 the chain is Cytoplasmic.

The protein belongs to the cation transport ATPase (P-type) (TC 3.A.3) family. Type IIC subfamily. The sodium/potassium-transporting ATPase is composed of a catalytic alpha subunit, an auxiliary non-catalytic beta subunit and an additional regulatory subunit. Interacts with regulatory subunit FXYD1. Interacts with regulatory subunit FXYD3. Interacts with SIK1. Interacts with SLC35G1 and STIM1. Interacts with CLN3; this interaction regulates the sodium/potassium-transporting ATPase complex localization at the plasma membrane. Interacts with SCN7A; activates ATP1A1 P-type sodium:potassium-exchanging transporter activity which indirectly signals to nearby neurons to regulate sodium homeostasis. Post-translationally, phosphorylation on Tyr-10 modulates pumping activity. Phosphorylation of Ser-943 by PKA modulates the response of ATP1A1 to PKC. Dephosphorylation by protein phosphatase 2A (PP2A) following increases in intracellular sodium, leading to increase catalytic activity.

The protein localises to the cell membrane. Its subcellular location is the basolateral cell membrane. The protein resides in the sarcolemma. It is found in the cell projection. It localises to the axon. The protein localises to the melanosome. It catalyses the reaction K(+)(out) + Na(+)(in) + ATP + H2O = K(+)(in) + Na(+)(out) + ADP + phosphate + H(+). Functionally, this is the catalytic component of the active enzyme, which catalyzes the hydrolysis of ATP coupled with the exchange of sodium and potassium ions across the plasma membrane. This action creates the electrochemical gradient of sodium and potassium ions, providing the energy for active transport of various nutrients. Could also be part of an osmosensory signaling pathway that senses body-fluid sodium levels and controls salt intake behavior as well as voluntary water intake to regulate sodium homeostasis. This chain is Sodium/potassium-transporting ATPase subunit alpha-1 (ATP1A1), found in Pongo abelii (Sumatran orangutan).